The sequence spans 187 residues: Capsid protein (187 aa).

A compositionally biased stretch (basic residues) spans 151–180; that stretch reads RRGSARVVRSPRRRTPSPRRRRSQSPRRRP. The segment at 151–187 is disordered; the sequence is RRGSARVVRSPRRRTPSPRRRRSQSPRRRPQSPASNC. A phosphoserine; by host mark is found at Ser-160, Ser-167, and Ser-175. Repeat copies occupy residues 160–164, 167–171, and 175–179. A 3 X 5 AA repeats of S-P-R-R-R region spans residues 160–179; the sequence is SPRRRTPSPRRRRSQSPRRR. The Bipartite nuclear localization signal signature appears at 163-180; sequence RRTPSPRRRRSQSPRRRP. Residues 181-187 are RNA binding; the sequence is QSPASNC.

The protein belongs to the orthohepadnavirus core antigen family. As to quaternary structure, homodimerizes, then multimerizes. Interacts with cytosol exposed regions of viral L glycoprotein present in the reticulum-to-Golgi compartment. Interacts with human FLNB. Phosphorylated form interacts with host importin alpha; this interaction depends on the exposure of the NLS, which itself depends upon genome maturation and/or phosphorylation of the capsid protein. Interacts with host NUP153. Post-translationally, phosphorylated by host SRPK1, SRPK2, and maybe protein kinase C or GAPDH. Phosphorylation is critical for pregenomic RNA packaging. Protein kinase C phosphorylation is stimulated by HBx protein and may play a role in transport of the viral genome to the nucleus at the late step during the viral replication cycle.

The protein localises to the virion. It is found in the host cytoplasm. Self assembles to form an icosahedral capsid. Most capsids appear to be large particles with an icosahedral symmetry of T=4 and consist of 240 copies of capsid protein, though a fraction forms smaller T=3 particles consisting of 180 capsid proteins. Entering capsids are transported along microtubules to the nucleus. Phosphorylation of the capsid is thought to induce exposure of nuclear localization signal in the C-terminal portion of the capsid protein that allows binding to the nuclear pore complex via the importin (karyopherin-) alpha and beta. Capsids are imported in intact form through the nuclear pore into the nuclear basket, where it probably binds NUP153. Only capsids that contain the mature viral genome can release the viral DNA and capsid protein into the nucleoplasm. Immature capsids get stuck in the basket. Capsids encapsulate the pre-genomic RNA and the P protein. Pre-genomic RNA is reverse-transcribed into DNA while the capsid is still in the cytoplasm. The capsid can then either be directed to the nucleus, providing more genomes for transcription, or bud through the endoplasmic reticulum to provide new virions. This Urocitellus parryii kennicottii (ASHV) protein is Capsid protein.